The sequence spans 503 residues: ATP synthase subunit alpha (503 aa).

G169–T176 serves as a coordination point for ATP.

It belongs to the ATPase alpha/beta chains family. F-type ATPases have 2 components, CF(1) - the catalytic core - and CF(0) - the membrane proton channel. CF(1) has five subunits: alpha(3), beta(3), gamma(1), delta(1), epsilon(1). CF(0) has three main subunits: a(1), b(2) and c(9-12). The alpha and beta chains form an alternating ring which encloses part of the gamma chain. CF(1) is attached to CF(0) by a central stalk formed by the gamma and epsilon chains, while a peripheral stalk is formed by the delta and b chains.

The protein resides in the cell membrane. The catalysed reaction is ATP + H2O + 4 H(+)(in) = ADP + phosphate + 5 H(+)(out). With respect to regulation, increases 2-fold following exposure to low pH. Its function is as follows. Produces ATP from ADP in the presence of a proton gradient across the membrane. The alpha chain is a regulatory subunit. The polypeptide is ATP synthase subunit alpha (Lactobacillus acidophilus (strain ATCC 700396 / NCK56 / N2 / NCFM)).